The sequence spans 823 residues: Trimethylamine-N-oxide reductase (823 aa).

A signal peptide (tat-type signal) is located at residues Met1–Ala32. A Mo-bis(molybdopterin guanine dinucleotide)-binding site is contributed by Ser181.

The protein belongs to the prokaryotic molybdopterin-containing oxidoreductase family. The cofactor is Mo-bis(molybdopterin guanine dinucleotide). Post-translationally, predicted to be exported by the Tat system. The position of the signal peptide cleavage has not been experimentally proven.

The protein resides in the periplasm. The catalysed reaction is trimethylamine + 2 Fe(III)-[cytochrome c] + H2O = trimethylamine N-oxide + 2 Fe(II)-[cytochrome c] + 3 H(+). Functionally, reduces trimethylamine-N-oxide (TMAO) into trimethylamine; an anaerobic reaction coupled to energy-yielding reactions. The protein is Trimethylamine-N-oxide reductase (torA) of Pasteurella multocida (strain Pm70).